We begin with the raw amino-acid sequence, 198 residues long: GTP cyclohydrolase-2 (198 aa).

52–56 provides a ligand contact to GTP; sequence RMHSE. Zn(2+)-binding residues include Cys-57, Cys-68, and Cys-70. GTP contacts are provided by residues Gln-73, 94-96, and Thr-116; that span reads EGR. The active-site Proton acceptor is the Asp-128. The Nucleophile role is filled by Arg-130. Positions 151 and 156 each coordinate GTP.

This sequence belongs to the GTP cyclohydrolase II family. Zn(2+) is required as a cofactor.

The catalysed reaction is GTP + 4 H2O = 2,5-diamino-6-hydroxy-4-(5-phosphoribosylamino)-pyrimidine + formate + 2 phosphate + 3 H(+). It participates in cofactor biosynthesis; riboflavin biosynthesis; 5-amino-6-(D-ribitylamino)uracil from GTP: step 1/4. Functionally, catalyzes the conversion of GTP to 2,5-diamino-6-ribosylamino-4(3H)-pyrimidinone 5'-phosphate (DARP), formate and pyrophosphate. The polypeptide is GTP cyclohydrolase-2 (Vibrio cholerae serotype O1 (strain ATCC 39315 / El Tor Inaba N16961)).